A 210-amino-acid chain; its full sequence is Thymidylate kinase (210 aa).

Residue 10 to 17 participates in ATP binding; the sequence is GPEGAGKS.

It belongs to the thymidylate kinase family.

It catalyses the reaction dTMP + ATP = dTDP + ADP. Its function is as follows. Phosphorylation of dTMP to form dTDP in both de novo and salvage pathways of dTTP synthesis. This chain is Thymidylate kinase, found in Pseudomonas fluorescens (strain ATCC BAA-477 / NRRL B-23932 / Pf-5).